Reading from the N-terminus, the 56-residue chain is MRDVIKLVSSAGTGHCYYTTKNKRTMTEKMQMKKYDPIARKHVIFTEGKISKGGGK.

This sequence belongs to the bacterial ribosomal protein bL33 family.

The chain is Large ribosomal subunit protein bL33C from Sorangium cellulosum (strain So ce56) (Polyangium cellulosum (strain So ce56)).